The primary structure comprises 330 residues: Trans-1,2-dihydrobenzene-1,2-diol dehydrogenase (330 aa).

The protein belongs to the Gfo/Idh/MocA family. As to quaternary structure, homodimer.

It carries out the reaction (1R,2R)-1,2-dihydrobenzene-1,2-diol + NADP(+) = catechol + NADPH + H(+). The enzyme catalyses D-xylose + NADP(+) = D-xylono-1,5-lactone + NADPH + H(+). This Xenopus tropicalis (Western clawed frog) protein is Trans-1,2-dihydrobenzene-1,2-diol dehydrogenase (dhdh).